Consider the following 141-residue polypeptide: Large ribosomal subunit protein uL11 (141 aa).

This sequence belongs to the universal ribosomal protein uL11 family. In terms of assembly, part of the ribosomal stalk of the 50S ribosomal subunit. Interacts with L10 and the large rRNA to form the base of the stalk. L10 forms an elongated spine to which L12 dimers bind in a sequential fashion forming a multimeric L10(L12)X complex. In terms of processing, one or more lysine residues are methylated.

Its function is as follows. Forms part of the ribosomal stalk which helps the ribosome interact with GTP-bound translation factors. This Alkaliphilus metalliredigens (strain QYMF) protein is Large ribosomal subunit protein uL11.